A 417-amino-acid chain; its full sequence is Gamma-glutamyl phosphate reductase (417 aa).

It belongs to the gamma-glutamyl phosphate reductase family.

It is found in the cytoplasm. It carries out the reaction L-glutamate 5-semialdehyde + phosphate + NADP(+) = L-glutamyl 5-phosphate + NADPH + H(+). It functions in the pathway amino-acid biosynthesis; L-proline biosynthesis; L-glutamate 5-semialdehyde from L-glutamate: step 2/2. Functionally, catalyzes the NADPH-dependent reduction of L-glutamate 5-phosphate into L-glutamate 5-semialdehyde and phosphate. The product spontaneously undergoes cyclization to form 1-pyrroline-5-carboxylate. The chain is Gamma-glutamyl phosphate reductase from Klebsiella pneumoniae subsp. pneumoniae (strain ATCC 700721 / MGH 78578).